Here is a 405-residue protein sequence, read N- to C-terminus: Arrestin red cell isoform 2 (405 aa).

Belongs to the arrestin family.

The protein resides in the cytoplasm. In Oncorhynchus mykiss (Rainbow trout), this protein is Arrestin red cell isoform 2.